The primary structure comprises 161 residues: Vitamin K epoxide reductase complex subunit 1 (161 aa).

Residues 1–9 (MGTTWRSPG) lie on the Cytoplasmic side of the membrane. A helical transmembrane segment spans residues 10 to 29 (RLRLALCLAGLALSLYALHV). Topologically, residues 30–80 (KAARARNEDYRALCDVGTAISCSRVFSSRWGRGFGLVEHVLGADSILNQSN) are lumenal. A disulfide bridge links Cys43 with Cys51. A (S)-warfarin-binding site is contributed by Asn80. The chain crosses the membrane as a helical span at residues 81–95 (SIFGCMFYTIQLLLG). The Cytoplasmic portion of the chain corresponds to 96–100 (CLRGR). Residues 101–128 (WASILLILSSLVSVAGSLYLAWILFFVL) form a helical membrane-spanning segment. Residues 129–131 (YDF) lie on the Lumenal side of the membrane. Cys132 and Cys135 form a disulfide bridge. Residues 132–153 (CIVCITTYAINAGLMLLSFQKV) form a helical membrane-spanning segment. 2 residues coordinate phylloquinone: Cys135 and Tyr139. Tyr139 serves as a coordination point for (S)-warfarin. Over 154–161 (PEHKVKKP) the chain is Cytoplasmic.

It belongs to the VKOR family. As to expression, highly expressed in liver. Detected at lower levels in lung, kidney and testis.

It localises to the endoplasmic reticulum membrane. The enzyme catalyses phylloquinone + [protein]-disulfide + H2O = 2,3-epoxyphylloquinone + [protein]-dithiol. The catalysed reaction is phylloquinol + [protein]-disulfide = phylloquinone + [protein]-dithiol. Inhibited by warfarin (coumadin). Warfarin locks VKORC1 in both redox states into the closed conformation. Involved in vitamin K metabolism. Catalytic subunit of the vitamin K epoxide reductase (VKOR) complex which reduces inactive vitamin K 2,3-epoxide to active vitamin K. Vitamin K is required for the gamma-carboxylation of various proteins, including clotting factors, and is required for normal blood coagulation, but also for normal bone development. The sequence is that of Vitamin K epoxide reductase complex subunit 1 (Vkorc1) from Rattus norvegicus (Rat).